We begin with the raw amino-acid sequence, 316 residues long: Homoserine kinase (316 aa).

ATP is bound at residue 97–107 (PHSRGLGSSAA).

Belongs to the GHMP kinase family. Homoserine kinase subfamily.

It localises to the cytoplasm. It catalyses the reaction L-homoserine + ATP = O-phospho-L-homoserine + ADP + H(+). The protein operates within amino-acid biosynthesis; L-threonine biosynthesis; L-threonine from L-aspartate: step 4/5. Functionally, catalyzes the ATP-dependent phosphorylation of L-homoserine to L-homoserine phosphate. In Mycobacterium tuberculosis (strain ATCC 25618 / H37Rv), this protein is Homoserine kinase.